A 208-amino-acid polypeptide reads, in one-letter code: Small ribosomal subunit protein uS3 (208 aa).

The region spanning 16-85 (IDEYFKKELS…KPQIDVKPVE (70 aa)) is the KH type-2 domain.

Belongs to the universal ribosomal protein uS3 family. In terms of assembly, part of the 30S ribosomal subunit.

Its function is as follows. Binds the lower part of the 30S subunit head. This is Small ribosomal subunit protein uS3 from Methanocaldococcus jannaschii (strain ATCC 43067 / DSM 2661 / JAL-1 / JCM 10045 / NBRC 100440) (Methanococcus jannaschii).